The following is a 149-amino-acid chain: Lipoprotein MlpF (149 aa).

Residues 1 to 17 (MKIINILFCLFLLLLNS) form the signal peptide. C18 is lipidated: N-palmitoyl cysteine. A lipid anchor (S-diacylglycerol cysteine) is attached at C18. The tract at residues 26–58 (LKNNAQQTKSRGKRDLTQKEATPEKPKSKEELL) is disordered. Basic and acidic residues predominate over residues 38–58 (KRDLTQKEATPEKPKSKEELL).

Belongs to the Multicopy lipoprotein (Mlp) family.

It localises to the cell outer membrane. An outer membrane protein that may participate in pathogenesis. Some human Lyme disease patients have antibodies against this protein. The Mlp proteins probably undergo intragenic recombination, generating new alleles. This chain is Lipoprotein MlpF, found in Borreliella burgdorferi (strain ATCC 35210 / DSM 4680 / CIP 102532 / B31) (Borrelia burgdorferi).